We begin with the raw amino-acid sequence, 241 residues long: Small ribosomal subunit protein uS3 (241 aa).

In terms of domain architecture, KH type-2 spans 39–109 (IRQYITKNLS…QIRINVIEVQ (71 aa)). The segment at 214 to 241 (EEIPMPVPSQTPRRQRRRQQFEDRSGEE) is disordered. The segment covering 232-241 (QQFEDRSGEE) has biased composition (basic and acidic residues).

It belongs to the universal ribosomal protein uS3 family. As to quaternary structure, part of the 30S ribosomal subunit. Forms a tight complex with proteins S10 and S14.

Functionally, binds the lower part of the 30S subunit head. Binds mRNA in the 70S ribosome, positioning it for translation. This Rippkaea orientalis (strain PCC 8801 / RF-1) (Cyanothece sp. (strain PCC 8801)) protein is Small ribosomal subunit protein uS3.